Reading from the N-terminus, the 234-residue chain is Large ribosomal subunit protein uL1 (234 aa).

The protein belongs to the universal ribosomal protein uL1 family. As to quaternary structure, part of the 50S ribosomal subunit.

Binds directly to 23S rRNA. The L1 stalk is quite mobile in the ribosome, and is involved in E site tRNA release. In terms of biological role, protein L1 is also a translational repressor protein, it controls the translation of the L11 operon by binding to its mRNA. This chain is Large ribosomal subunit protein uL1, found in Pectobacterium atrosepticum (strain SCRI 1043 / ATCC BAA-672) (Erwinia carotovora subsp. atroseptica).